Here is a 472-residue protein sequence, read N- to C-terminus: Chromosomal replication initiator protein DnaA (472 aa).

The tract at residues 1–73 is domain I, interacts with DnaA modulators; the sequence is MSNMEQDRWS…LSCWQAELPE (73 aa). The segment at 73-128 is domain II; that stretch reads EVNRVDLTVRSPVRCAAPAKEAPAPVESRRDEQRPSAERSNGATPVSANHDALGGS. A disordered region spans residues 89–124; that stretch reads APAKEAPAPVESRRDEQRPSAERSNGATPVSANHDA. Basic and acidic residues predominate over residues 99–109; sequence ESRRDEQRPSA. The span at 110-119 shows a compositional bias: polar residues; the sequence is ERSNGATPVS. A domain III, AAA+ region region spans residues 129-351; the sequence is PLDPRLTFAS…GAINRLLAHS (223 aa). 4 residues coordinate ATP: Gly176, Gly178, Lys179, and Thr180. The interval 352–472 is domain IV, binds dsDNA; that stretch reads KLNNQPVTLE…VESLKRQLQE (121 aa).

Belongs to the DnaA family. In terms of assembly, oligomerizes as a right-handed, spiral filament on DNA at oriC.

It is found in the cytoplasm. Plays an essential role in the initiation and regulation of chromosomal replication. ATP-DnaA binds to the origin of replication (oriC) to initiate formation of the DNA replication initiation complex once per cell cycle. Binds the DnaA box (a 9 base pair repeat at the origin) and separates the double-stranded (ds)DNA. Forms a right-handed helical filament on oriC DNA; dsDNA binds to the exterior of the filament while single-stranded (ss)DNA is stabiized in the filament's interior. The ATP-DnaA-oriC complex binds and stabilizes one strand of the AT-rich DNA unwinding element (DUE), permitting loading of DNA polymerase. After initiation quickly degrades to an ADP-DnaA complex that is not apt for DNA replication. Binds acidic phospholipids. The chain is Chromosomal replication initiator protein DnaA from Rhodopseudomonas palustris (strain TIE-1).